The chain runs to 826 residues: U-box domain-containing protein 4 (826 aa).

Residues 172–204 are a coiled coil; sequence RSNQEILIEAVALERQKEMAEQSENNAEVEFLD. The 75-residue stretch at 229–303 folds into the U-box domain; the sequence is AILADFFCPL…ANWCETNDVK (75 aa). Residues 330–501 form a disordered region; it reads GADVSARKVS…TRRDLSDFSP (172 aa). Polar residues predominate over residues 347 to 360; that stretch reads ASSSETGKPSFSSR. Basic and acidic residues predominate over residues 391-414; sequence DARRGSLNDFEDRSNDSRELRTDA. The residue at position 396 (Ser-396) is a Phosphoserine. Low complexity predominate over residues 416–428; it reads GRSSVSSTTRGSV. The span at 492–501 shows a compositional bias: basic and acidic residues; it reads TRRDLSDFSP. 7 ARM repeats span residues 530–570, 573–612, 614–653, 655–694, 696–734, 736–775, and 778–817; these read NETR…LLAK, MDNR…NLSI, DNNK…SLSV, EENK…NLSI, QENK…NLAT, PEGR…QLST, and GRFC…YFRN.

It catalyses the reaction S-ubiquitinyl-[E2 ubiquitin-conjugating enzyme]-L-cysteine + [acceptor protein]-L-lysine = [E2 ubiquitin-conjugating enzyme]-L-cysteine + N(6)-ubiquitinyl-[acceptor protein]-L-lysine.. It participates in protein modification; protein ubiquitination. Its function is as follows. Functions as an E3 ubiquitin ligase. This Arabidopsis thaliana (Mouse-ear cress) protein is U-box domain-containing protein 4 (PUB4).